The sequence spans 105 residues: Fungal protease inhibitor-1 (105 aa).

Residues 1 to 19 (MKAVITLLFLACILVVTYG) form the signal peptide. Intrachain disulfides connect Cys23-Cys56, Cys28-Cys58, Cys33-Cys59, Cys42-Cys62, Cys72-Cys93, and Cys87-Cys98.

Its function is as follows. Inhibits proteases from the fungi A.oryzae and R.oryzae, trypsin and chymotrypsin. Does not inhibit protease from the bacterium B.licheniformis or papain. This is Fungal protease inhibitor-1 from Antheraea mylitta (Tasar silkworm).